The chain runs to 311 residues: Probable manganese-dependent inorganic pyrophosphatase (311 aa).

Mn(2+)-binding residues include His-9, Asp-13, Asp-15, Asp-77, His-99, and Asp-151.

This sequence belongs to the PPase class C family. Mn(2+) serves as cofactor.

It localises to the cytoplasm. It carries out the reaction diphosphate + H2O = 2 phosphate + H(+). The sequence is that of Probable manganese-dependent inorganic pyrophosphatase from Streptococcus pyogenes serotype M49 (strain NZ131).